Consider the following 246-residue polypeptide: tRNA (guanine-N(1)-)-methyltransferase (246 aa).

Residues Gly-114 and 134–139 (IGDYIL) each bind S-adenosyl-L-methionine.

This sequence belongs to the RNA methyltransferase TrmD family. In terms of assembly, homodimer.

Its subcellular location is the cytoplasm. It catalyses the reaction guanosine(37) in tRNA + S-adenosyl-L-methionine = N(1)-methylguanosine(37) in tRNA + S-adenosyl-L-homocysteine + H(+). Functionally, specifically methylates guanosine-37 in various tRNAs. The sequence is that of tRNA (guanine-N(1)-)-methyltransferase from Coxiella burnetii (strain RSA 331 / Henzerling II).